The primary structure comprises 118 residues: DNA-binding protein MmarC5_1518 (118 aa).

The segment covering 1-12 (MNPEEIRQRRLQ) has biased composition (basic and acidic residues). The disordered stretch occupies residues 1–35 (MNPEEIRQRRLQEMQAKAQEQGAEDPEAQRQAQEQ).

Belongs to the PDCD5 family.

This chain is DNA-binding protein MmarC5_1518, found in Methanococcus maripaludis (strain C5 / ATCC BAA-1333).